A 584-amino-acid chain; its full sequence is Proteasome-associated ATPase (584 aa).

Positions 8–90 (RHAERDRDEL…KEEVDRLSQP (83 aa)) form a coiled coil. 272 to 277 (GCGKTL) serves as a coordination point for ATP. A docks into pockets in the proteasome alpha-ring region spans residues 583-584 (YL).

Belongs to the AAA ATPase family. In terms of assembly, homohexamer. Assembles into a hexameric ring structure that caps the 20S proteasome core. Strongly interacts with the prokaryotic ubiquitin-like protein Pup through a hydrophobic interface; the interacting region of ARC lies in its N-terminal coiled-coil domain. There is one Pup binding site per ARC hexamer ring. Upon ATP-binding, the C-terminus of ARC interacts with the alpha-rings of the proteasome core, possibly by binding to the intersubunit pockets.

The protein operates within protein degradation; proteasomal Pup-dependent pathway. ATPase which is responsible for recognizing, binding, unfolding and translocation of pupylated proteins into the bacterial 20S proteasome core particle. May be essential for opening the gate of the 20S proteasome via an interaction with its C-terminus, thereby allowing substrate entry and access to the site of proteolysis. Thus, the C-termini of the proteasomal ATPase may function like a 'key in a lock' to induce gate opening and therefore regulate proteolysis. The protein is Proteasome-associated ATPase of Thermobifida fusca (strain YX).